Here is a 197-residue protein sequence, read N- to C-terminus: Fe/S biogenesis protein NfuA (197 aa).

Positions 155 and 158 each coordinate [4Fe-4S] cluster.

It belongs to the NfuA family. In terms of assembly, homodimer. It depends on [4Fe-4S] cluster as a cofactor.

Functionally, involved in iron-sulfur cluster biogenesis. Binds a 4Fe-4S cluster, can transfer this cluster to apoproteins, and thereby intervenes in the maturation of Fe/S proteins. Could also act as a scaffold/chaperone for damaged Fe/S proteins. This chain is Fe/S biogenesis protein NfuA, found in Pseudomonas syringae pv. syringae (strain B728a).